The chain runs to 387 residues: Protein SGT1 homolog (387 aa).

TPR repeat units follow at residues 1 to 34 (MEQL…SNNA), 36 to 67 (AFFK…DSNN), and 68 to 101 (SKYY…DSEN). 2 disordered regions span residues 110–193 (KSKA…PSSG) and 299–323 (SPAV…EEKL). Low complexity predominate over residues 118–127 (NPTTTTTTTP). A compositionally biased stretch (pro residues) spans 128–138 (TPTPTPTPAPQ). A compositionally biased stretch (low complexity) spans 139 to 185 (PVTTTTNPTPIPTTSNTTTTTNNNNNNNNNNNNNNNNNNTTTDSTTT). In terms of domain architecture, CS spans 193–282 (GNKVRHEWYQ…SRAIKWDTLE (90 aa)). One can recognise an SGS domain in the interval 301-387 (AVPSPYASKK…KGLEFKQYEK (87 aa)). Basic and acidic residues predominate over residues 308–323 (SKKDWDKLPNEPEEKL).

It belongs to the SGT1 family.

May play a role in ubiquitination and subsequent proteasomal degradation of target proteins. The polypeptide is Protein SGT1 homolog (sugt1) (Dictyostelium discoideum (Social amoeba)).